The following is a 301-amino-acid chain: GTPase Era (301 aa).

The Era-type G domain occupies 6–173 (KSGFVAIVGR…LEQTNANLEI (168 aa)). The G1 stretch occupies residues 14–21 (GRPNVGKS). 14 to 21 (GRPNVGKS) serves as a coordination point for GTP. The G2 stretch occupies residues 40–44 (QTTRN). The tract at residues 61 to 64 (DTPG) is G3. Residues 61–65 (DTPGI) and 123–126 (NKID) contribute to the GTP site. The tract at residues 123 to 126 (NKID) is G4. The G5 stretch occupies residues 152–154 (ISA). The KH type-2 domain occupies 204-282 (TREEVPHSVA…FLEIWVKVQK (79 aa)).

This sequence belongs to the TRAFAC class TrmE-Era-EngA-EngB-Septin-like GTPase superfamily. Era GTPase family. In terms of assembly, monomer.

It is found in the cytoplasm. Its subcellular location is the cell membrane. In terms of biological role, an essential GTPase that binds both GDP and GTP, with rapid nucleotide exchange. Plays a role in 16S rRNA processing and 30S ribosomal subunit biogenesis and possibly also in cell cycle regulation and energy metabolism. The polypeptide is GTPase Era (Listeria monocytogenes serotype 4b (strain F2365)).